The primary structure comprises 447 residues: UDP-glycosyltransferase 76B1 (447 aa).

UDP-alpha-D-glucose contacts are provided by residues serine 269, 327–328, 345–353, and 367–370; these read WA, HCGWNSTLE, and FGDQ.

This sequence belongs to the UDP-glycosyltransferase family. Expressed in roots, leaves, hydathodes, sepals and style.

Functionally, glycosylates the amino acid-related molecules isoleucic acid (2-hydroxy-3-methylpentanoic acid) and valic acid (2-hydroxy-3-methylbutyric acid). Acts as a negative regulator of salicylic acid (SA)-dependent plant defense in the absence of pathogens and promotes the jasmonate (JA) response. Negatively influences the onset of senescence. The chain is UDP-glycosyltransferase 76B1 from Arabidopsis thaliana (Mouse-ear cress).